The sequence spans 1005 residues: Isoleucine--tRNA ligase (1005 aa).

Residues 70-80 (PYANGNIHIGH) carry the 'HIGH' region motif. An L-isoleucyl-5'-AMP-binding site is contributed by glutamate 629. Positions 670–674 (KMSKS) match the 'KMSKS' region motif. Residue lysine 673 coordinates ATP.

This sequence belongs to the class-I aminoacyl-tRNA synthetase family. IleS type 1 subfamily. As to quaternary structure, monomer.

Its subcellular location is the cytoplasm. The catalysed reaction is tRNA(Ile) + L-isoleucine + ATP = L-isoleucyl-tRNA(Ile) + AMP + diphosphate. Its function is as follows. Catalyzes the attachment of isoleucine to tRNA(Ile). As IleRS can inadvertently accommodate and process structurally similar amino acids such as valine, to avoid such errors it has two additional distinct tRNA(Ile)-dependent editing activities. One activity is designated as 'pretransfer' editing and involves the hydrolysis of activated Val-AMP. The other activity is designated 'posttransfer' editing and involves deacylation of mischarged Val-tRNA(Ile). The sequence is that of Isoleucine--tRNA ligase from Rhodopseudomonas palustris (strain ATCC BAA-98 / CGA009).